An 83-amino-acid polypeptide reads, in one-letter code: Exodeoxyribonuclease 7 small subunit (83 aa).

The tract at residues 63 to 83 (VQNDDGTTGTEPLADTGESGR) is disordered.

It belongs to the XseB family. As to quaternary structure, heterooligomer composed of large and small subunits.

It is found in the cytoplasm. It carries out the reaction Exonucleolytic cleavage in either 5'- to 3'- or 3'- to 5'-direction to yield nucleoside 5'-phosphates.. Bidirectionally degrades single-stranded DNA into large acid-insoluble oligonucleotides, which are then degraded further into small acid-soluble oligonucleotides. This is Exodeoxyribonuclease 7 small subunit from Gluconobacter oxydans (strain 621H) (Gluconobacter suboxydans).